A 143-amino-acid polypeptide reads, in one-letter code: Putative complexin-1 (143 aa).

A disordered region spans residues 16 to 72 (EVTGGLGMKDDGGEKTETGEDPEVIAARLEQEERRKEKHRKMENEREKMRQGIRDKY). 2 stretches are compositionally biased toward basic and acidic residues: residues 23–33 (MKDDGGEKTET) and 44–72 (LEQE…RDKY). Residues 40 to 71 (IAARLEQEERRKEKHRKMENEREKMRQGIRDK) adopt a coiled-coil conformation.

This sequence belongs to the complexin/synaphin family.

It is found in the cytoplasm. The protein localises to the cytosol. Functionally, positively regulates a late step in synaptic vesicle exocytosis. This chain is Putative complexin-1 (cpx-1), found in Caenorhabditis elegans.